A 92-amino-acid chain; its full sequence is Small ribosomal subunit protein uS19 (92 aa).

This sequence belongs to the universal ribosomal protein uS19 family.

Protein S19 forms a complex with S13 that binds strongly to the 16S ribosomal RNA. The chain is Small ribosomal subunit protein uS19 from Rhodopseudomonas palustris (strain BisB18).